The primary structure comprises 562 residues: TBC1 domain family member 24 (562 aa).

A 1,2-diacyl-sn-glycero-3-phospho-(1D-myo-inositol)-binding positions include K36, R40, K238, R242, and 293 to 297 (RLFSR). Residues 42 to 259 (GHWAKSHSLR…FFHKVRGGQP (218 aa)) enclose the Rab-GAP TBC domain. In terms of domain architecture, TLDc spans 337–549 (EIVSVKEMRD…ISIIEVWGFK (213 aa)). A compositionally biased stretch (low complexity) spans 451–464 (ASSGDNDANSSQSA). A disordered region spans residues 451–471 (ASSGDNDANSSQSAKDGIDPS).

In terms of assembly, interacts with ARF6.

Its subcellular location is the cell membrane. It is found in the cytoplasm. The protein resides in the cytoplasmic vesicle membrane. The protein localises to the presynapse. In terms of biological role, may act as a GTPase-activating protein for Rab family protein(s). Involved in neuronal projections development, probably through a negative modulation of ARF6 function. Involved in the regulation of synaptic vesicle trafficking. The chain is TBC1 domain family member 24 (tbc1d24) from Xenopus tropicalis (Western clawed frog).